A 100-amino-acid chain; its full sequence is Non-histone chromosomal protein HMG-14 (100 aa).

The disordered stretch occupies residues 1 to 100; it reads MPKRKVSSAE…EAGEKEAKSD (100 aa). ADP-ribosylserine is present on S7. S8 bears the Phosphoserine mark. Position 14 is an N6-acetyllysine (K14). Residue S21 is modified to Phosphoserine; by RPS6KA5. Residue S25 is modified to ADP-ribosylserine; alternate. S25 is modified (phosphoserine; alternate; by RPS6KA5). K27 carries the post-translational modification N6-acetyllysine. 2 stretches are compositionally biased toward basic and acidic residues: residues 30 to 50 and 69 to 85; these read AKVE…DKKV and ETKE…KTEE. The residue at position 81 (T81) is a Phosphothreonine. The residue at position 82 (K82) is an N6-acetyllysine. Residues S86, S89, and S99 each carry the phosphoserine modification.

As to quaternary structure, interacts with transcriptional regulator SEHBP. In terms of processing, phosphorylation on Ser-21 and Ser-25 weakens binding to nucleosomes and increases the rate of H3 phosphorylation. Phosphorylation favors cytoplasmic localization.

It localises to the nucleus. It is found in the cytoplasm. In terms of biological role, binds to the inner side of the nucleosomal DNA thus altering the interaction between the DNA and the histone octamer. May be involved in the process which maintains transcribable genes in a unique chromatin conformation. Inhibits the phosphorylation of nucleosomal histones H3 and H2A by RPS6KA5/MSK1 and RPS6KA3/RSK2. The polypeptide is Non-histone chromosomal protein HMG-14 (HMGN1) (Homo sapiens (Human)).